Consider the following 250-residue polypeptide: Histone H1.2 (250 aa).

Residues 1 to 11 are compositionally biased toward polar residues; sequence MSDSAVATSAS. 2 disordered regions span residues 1 to 53 and 101 to 250; these read MSDS…QMVD and KLIQ…ATKK. Positions 27-42 are enriched in low complexity; the sequence is KKAAATPKSKKSTAAP. Positions 44 to 118 constitute an H15 domain; the sequence is SHPPTQQMVD…GASGSFKLSR (75 aa). Basic and acidic residues predominate over residues 120 to 133; it reads AKKDPKPKASAVEK. Low complexity predominate over residues 151 to 161; sequence STSTTKKAAGA. The segment covering 174-191 has biased composition (basic and acidic residues); the sequence is KSVEKKRADKAKAKDAKK. A compositionally biased stretch (low complexity) spans 192–211; it reads TGTIKAKPTTAKAKSSATKP. Composition is skewed to basic residues over residues 212 to 225 and 235 to 250; these read KTPK…KPKK and TAVK…ATKK.

It belongs to the histone H1/H5 family.

It localises to the nucleus. Its subcellular location is the chromosome. Its function is as follows. Histones H1 are necessary for the condensation of nucleosome chains into higher-order structures. The protein is Histone H1.2 (His1.2) of Drosophila virilis (Fruit fly).